The following is a 688-amino-acid chain: Glycine--tRNA ligase beta subunit (688 aa).

It belongs to the class-II aminoacyl-tRNA synthetase family. Tetramer of two alpha and two beta subunits.

The protein resides in the cytoplasm. It carries out the reaction tRNA(Gly) + glycine + ATP = glycyl-tRNA(Gly) + AMP + diphosphate. The sequence is that of Glycine--tRNA ligase beta subunit from Histophilus somni (strain 2336) (Haemophilus somnus).